The chain runs to 287 residues: Pyridoxal 5'-phosphate synthase subunit PdxS (287 aa).

D21 lines the D-ribose 5-phosphate pocket. K78 acts as the Schiff-base intermediate with D-ribose 5-phosphate in catalysis. G150 contributes to the D-ribose 5-phosphate binding site. R162 serves as a coordination point for D-glyceraldehyde 3-phosphate. Residues G211 and 232–233 (GS) each bind D-ribose 5-phosphate.

The protein belongs to the PdxS/SNZ family. In terms of assembly, in the presence of PdxT, forms a dodecamer of heterodimers.

The enzyme catalyses aldehydo-D-ribose 5-phosphate + D-glyceraldehyde 3-phosphate + L-glutamine = pyridoxal 5'-phosphate + L-glutamate + phosphate + 3 H2O + H(+). Its pathway is cofactor biosynthesis; pyridoxal 5'-phosphate biosynthesis. In terms of biological role, catalyzes the formation of pyridoxal 5'-phosphate from ribose 5-phosphate (RBP), glyceraldehyde 3-phosphate (G3P) and ammonia. The ammonia is provided by the PdxT subunit. Can also use ribulose 5-phosphate and dihydroxyacetone phosphate as substrates, resulting from enzyme-catalyzed isomerization of RBP and G3P, respectively. In Francisella philomiragia subsp. philomiragia (strain ATCC 25017 / CCUG 19701 / FSC 153 / O#319-036), this protein is Pyridoxal 5'-phosphate synthase subunit PdxS.